Reading from the N-terminus, the 151-residue chain is Chromophore lyase CpcS/CpeS homolog (151 aa).

This sequence belongs to the CpcS/CpeS biliprotein lyase family.

The protein localises to the plastid. The protein resides in the chloroplast. Might function to covalently attach a chromophore to Cys residue(s) of phycobiliproteins. This is Chromophore lyase CpcS/CpeS homolog from Gracilaria tenuistipitata var. liui (Red alga).